The following is a 308-amino-acid chain: Probable dimethyladenosine transferase (308 aa).

Residues Met-1–Lys-11 are compositionally biased toward basic residues. Positions Met-1–Phe-24 are disordered. A compositionally biased stretch (polar residues) spans Ala-12–Phe-24. 6 residues coordinate S-adenosyl-L-methionine: His-31, Leu-33, Gly-58, Glu-79, Asp-107, and Asn-122.

It belongs to the class I-like SAM-binding methyltransferase superfamily. rRNA adenine N(6)-methyltransferase family. Part of the small subunit (SSU) processome, composed of more than 70 proteins and the RNA chaperone small nucleolar RNA (snoRNA) U3.

It localises to the nucleus. The protein localises to the nucleolus. It catalyses the reaction adenosine(1779)/adenosine(1780) in 18S rRNA + 4 S-adenosyl-L-methionine = N(6)-dimethyladenosine(1779)/N(6)-dimethyladenosine(1780) in 18S rRNA + 4 S-adenosyl-L-homocysteine + 4 H(+). In terms of biological role, specifically dimethylates two adjacent adenosines in the loop of a conserved hairpin near the 3'-end of 18S rRNA in the 40S particle. Involved in the pre-rRNA processing steps leading to small-subunit rRNA production independently of its RNA-modifying catalytic activity. Part of the small subunit (SSU) processome, first precursor of the small eukaryotic ribosomal subunit. During the assembly of the SSU processome in the nucleolus, many ribosome biogenesis factors, an RNA chaperone and ribosomal proteins associate with the nascent pre-rRNA and work in concert to generate RNA folding, modifications, rearrangements and cleavage as well as targeted degradation of pre-ribosomal RNA by the RNA exosome. The chain is Probable dimethyladenosine transferase from Caenorhabditis elegans.